The chain runs to 532 residues: Transcriptional regulatory protein RtcR (532 aa).

A Sigma-54 factor interaction domain is found at 186–424 (IATRNPHFNR…LSASVTRMAT (239 aa)). Residues 215-222 (GPTGAGKS) and 281-290 (ANGGMLFLDE) each bind ATP. Positions 485–504 (KSLSAAGRQLFDVSRQGKAS) form a DNA-binding region, H-T-H motif.

Functionally, transcriptional repressor of the rtcAB genes. Interacts with sigma-54. The sequence is that of Transcriptional regulatory protein RtcR (rtcR) from Escherichia coli (strain K12).